The sequence spans 115 residues: Phosphoribosyl-AMP cyclohydrolase (115 aa).

Asp-80 is a Mg(2+) binding site. Cys-81 provides a ligand contact to Zn(2+). Residues Asp-82 and Asp-84 each coordinate Mg(2+). Residues Cys-97 and Cys-104 each coordinate Zn(2+).

Belongs to the PRA-CH family. As to quaternary structure, homodimer. It depends on Mg(2+) as a cofactor. Zn(2+) serves as cofactor.

It is found in the cytoplasm. It catalyses the reaction 1-(5-phospho-beta-D-ribosyl)-5'-AMP + H2O = 1-(5-phospho-beta-D-ribosyl)-5-[(5-phospho-beta-D-ribosylamino)methylideneamino]imidazole-4-carboxamide. It functions in the pathway amino-acid biosynthesis; L-histidine biosynthesis; L-histidine from 5-phospho-alpha-D-ribose 1-diphosphate: step 3/9. Its function is as follows. Catalyzes the hydrolysis of the adenine ring of phosphoribosyl-AMP. The polypeptide is Phosphoribosyl-AMP cyclohydrolase (Mycobacterium leprae (strain Br4923)).